Consider the following 406-residue polypeptide: Succinylornithine transaminase (406 aa).

K252 carries the N6-(pyridoxal phosphate)lysine modification.

This sequence belongs to the class-III pyridoxal-phosphate-dependent aminotransferase family. AstC subfamily. The cofactor is pyridoxal 5'-phosphate.

The enzyme catalyses N(2)-succinyl-L-ornithine + 2-oxoglutarate = N-succinyl-L-glutamate 5-semialdehyde + L-glutamate. It participates in amino-acid degradation; L-arginine degradation via AST pathway; L-glutamate and succinate from L-arginine: step 3/5. Catalyzes the transamination of N(2)-succinylornithine and alpha-ketoglutarate into N(2)-succinylglutamate semialdehyde and glutamate. Can also act as an acetylornithine aminotransferase. This Escherichia coli O127:H6 (strain E2348/69 / EPEC) protein is Succinylornithine transaminase.